The following is a 378-amino-acid chain: Chaperone protein DnaJ (378 aa).

A J domain is found at 4 to 68 (DFYEILGVSR…ETRARYDRFG (65 aa)). Residues 136–218 (GGEKEIRIPH…CGGAGRKQET (83 aa)) form a CR-type zinc finger. Cys-149, Cys-152, Cys-166, Cys-169, Cys-192, Cys-195, Cys-206, and Cys-209 together coordinate Zn(2+). CXXCXGXG motif repeat units follow at residues 149-156 (CKTCSGSG), 166-173 (CGTCNGTG), 192-199 (CPTCNGEG), and 206-213 (CESCGGAG).

Belongs to the DnaJ family. Homodimer. It depends on Zn(2+) as a cofactor.

The protein resides in the cytoplasm. Functionally, participates actively in the response to hyperosmotic and heat shock by preventing the aggregation of stress-denatured proteins and by disaggregating proteins, also in an autonomous, DnaK-independent fashion. Unfolded proteins bind initially to DnaJ; upon interaction with the DnaJ-bound protein, DnaK hydrolyzes its bound ATP, resulting in the formation of a stable complex. GrpE releases ADP from DnaK; ATP binding to DnaK triggers the release of the substrate protein, thus completing the reaction cycle. Several rounds of ATP-dependent interactions between DnaJ, DnaK and GrpE are required for fully efficient folding. Also involved, together with DnaK and GrpE, in the DNA replication of plasmids through activation of initiation proteins. The polypeptide is Chaperone protein DnaJ (Picosynechococcus sp. (strain ATCC 27264 / PCC 7002 / PR-6) (Agmenellum quadruplicatum)).